The following is a 335-amino-acid chain: Lipoyl synthase (335 aa).

[4Fe-4S] cluster is bound by residues Cys55, Cys60, Cys66, Cys81, Cys85, Cys88, and Ser292. Residues 67-281 (WEDREATFLI…SKAAEEIGFL (215 aa)) form the Radical SAM core domain.

The protein belongs to the radical SAM superfamily. Lipoyl synthase family. The cofactor is [4Fe-4S] cluster.

The protein localises to the cytoplasm. It catalyses the reaction [[Fe-S] cluster scaffold protein carrying a second [4Fe-4S](2+) cluster] + N(6)-octanoyl-L-lysyl-[protein] + 2 oxidized [2Fe-2S]-[ferredoxin] + 2 S-adenosyl-L-methionine + 4 H(+) = [[Fe-S] cluster scaffold protein] + N(6)-[(R)-dihydrolipoyl]-L-lysyl-[protein] + 4 Fe(3+) + 2 hydrogen sulfide + 2 5'-deoxyadenosine + 2 L-methionine + 2 reduced [2Fe-2S]-[ferredoxin]. It functions in the pathway protein modification; protein lipoylation via endogenous pathway; protein N(6)-(lipoyl)lysine from octanoyl-[acyl-carrier-protein]: step 2/2. Its function is as follows. Catalyzes the radical-mediated insertion of two sulfur atoms into the C-6 and C-8 positions of the octanoyl moiety bound to the lipoyl domains of lipoate-dependent enzymes, thereby converting the octanoylated domains into lipoylated derivatives. The polypeptide is Lipoyl synthase (Kocuria rhizophila (strain ATCC 9341 / DSM 348 / NBRC 103217 / DC2201)).